Reading from the N-terminus, the 979-residue chain is Zinc finger protein 280D (979 aa).

Glycyl lysine isopeptide (Lys-Gly) (interchain with G-Cter in SUMO2) cross-links involve residues K32, K34, K74, and K87. Residues T89–V101 are compositionally biased toward polar residues. Positions T89 to V119 are disordered. The residue at position 104 (S104) is a Phosphoserine. Glycyl lysine isopeptide (Lys-Gly) (interchain with G-Cter in SUMO2) cross-links involve residues K126 and K140. Residues Y157–T236 form a disordered region. The span at S169–N187 shows a compositional bias: polar residues. Glycyl lysine isopeptide (Lys-Gly) (interchain with G-Cter in SUMO2) cross-links involve residues K189, K210, K223, K233, K275, K284, and K292. Residues E195–G235 are compositionally biased toward polar residues. 2 consecutive C2H2-type zinc fingers follow at residues F321–H343 and T358–H381. The C2H2-type 3; degenerate zinc-finger motif lies at T388 to K412. 2 consecutive C2H2-type zinc fingers follow at residues Y418 to H441 and C449 to H469. Disordered stretches follow at residues G523–S608, L739–E809, and F896–S979. Over residues S527–T541 the composition is skewed to low complexity. Polar residues-rich tracts occupy residues L542–K584 and S592–S608. Phosphoserine is present on S545. K550 participates in a covalent cross-link: Glycyl lysine isopeptide (Lys-Gly) (interchain with G-Cter in SUMO2). A compositionally biased stretch (basic and acidic residues) spans L739–N784. K740 participates in a covalent cross-link: Glycyl lysine isopeptide (Lys-Gly) (interchain with G-Cter in SUMO2). Over residues C786 to T797 the composition is skewed to polar residues. Over residues K798–E809 the composition is skewed to basic and acidic residues. Positions S905 to G914 are enriched in polar residues. Phosphoserine occurs at positions 908 and 911. The segment covering V970–S979 has biased composition (acidic residues). K976 is covalently cross-linked (Glycyl lysine isopeptide (Lys-Gly) (interchain with G-Cter in SUMO2)).

It localises to the nucleus. Its function is as follows. May function as a transcription factor. The protein is Zinc finger protein 280D (ZNF280D) of Homo sapiens (Human).